The primary structure comprises 118 residues: Large ribosomal subunit protein bL17 (118 aa).

Belongs to the bacterial ribosomal protein bL17 family. In terms of assembly, part of the 50S ribosomal subunit. Contacts protein L32.

The polypeptide is Large ribosomal subunit protein bL17 (Onion yellows phytoplasma (strain OY-M)).